The primary structure comprises 422 residues: NADP-dependent malic enzyme (422 aa).

The active-site Proton donor is tyrosine 39. Lysine 94 functions as the Proton acceptor in the catalytic mechanism. Lysine 94 lines the substrate pocket. The a divalent metal cation site is built by glutamate 136, aspartate 137, and aspartate 162. Residues 195–198 (AGAA), asparagine 286, and asparagine 318 each bind NADP(+). Asparagine 318 contacts substrate.

It belongs to the malic enzymes family. Mg(2+) serves as cofactor. The cofactor is Mn(2+).

It carries out the reaction (S)-malate + NADP(+) = pyruvate + CO2 + NADPH. The catalysed reaction is oxaloacetate + H(+) = pyruvate + CO2. In Halomonas elongata (strain ATCC 33173 / DSM 2581 / NBRC 15536 / NCIMB 2198 / 1H9), this protein is NADP-dependent malic enzyme.